A 412-amino-acid chain; its full sequence is CCA-adding enzyme (412 aa).

Residues Ser41 and Lys44 each coordinate ATP. 2 residues coordinate CTP: Ser41 and Lys44. The Mg(2+) site is built by Asp53, Asp55, and Asp106. ATP-binding residues include His129, Lys149, and Tyr158. Positions 129, 149, and 158 each coordinate CTP.

Belongs to the tRNA nucleotidyltransferase/poly(A) polymerase family. Archaeal CCA-adding enzyme subfamily. Homodimer. Mg(2+) serves as cofactor.

It catalyses the reaction a tRNA precursor + 2 CTP + ATP = a tRNA with a 3' CCA end + 3 diphosphate. The enzyme catalyses a tRNA with a 3' CCA end + 2 CTP + ATP = a tRNA with a 3' CCACCA end + 3 diphosphate. Its function is as follows. Catalyzes the addition and repair of the essential 3'-terminal CCA sequence in tRNAs without using a nucleic acid template. Adds these three nucleotides in the order of C, C, and A to the tRNA nucleotide-73, using CTP and ATP as substrates and producing inorganic pyrophosphate. tRNA 3'-terminal CCA addition is required both for tRNA processing and repair. Also involved in tRNA surveillance by mediating tandem CCA addition to generate a CCACCA at the 3' terminus of unstable tRNAs. While stable tRNAs receive only 3'-terminal CCA, unstable tRNAs are marked with CCACCA and rapidly degraded. The chain is CCA-adding enzyme from Saccharolobus islandicus (strain M.16.27) (Sulfolobus islandicus).